We begin with the raw amino-acid sequence, 248 residues long: Ribonuclease 3 (248 aa).

The 130-residue stretch at 16–145 (TEGLETSIGY…LLAAMYLDGG (130 aa)) folds into the RNase III domain. Glutamate 58 contributes to the Mg(2+) binding site. Residue aspartate 62 is part of the active site. The Mg(2+) site is built by asparagine 131 and glutamate 134. Glutamate 134 is an active-site residue. Residues 172–241 (DFKTDFQELA…ARQCLERLET (70 aa)) enclose the DRBM domain.

This sequence belongs to the ribonuclease III family. Homodimer. It depends on Mg(2+) as a cofactor.

It is found in the cytoplasm. It catalyses the reaction Endonucleolytic cleavage to 5'-phosphomonoester.. Its function is as follows. Digests double-stranded RNA. Involved in the processing of primary rRNA transcript to yield the immediate precursors to the large and small rRNAs (23S and 16S). Processes some mRNAs, and tRNAs when they are encoded in the rRNA operon. Processes pre-crRNA and tracrRNA of type II CRISPR loci if present in the organism. The protein is Ribonuclease 3 of Geobacter sulfurreducens (strain ATCC 51573 / DSM 12127 / PCA).